The following is a 265-amino-acid chain: MFKWPWKADDESGNAEMPWEQALAIPVLAHLSSTEQHKLTQMAARFLQQKRLVALQGLELTPLHQARIAMLFCLPVLELGIEWLDGFHEVLIYPAPFIVDDEWEDDIGLVHNQRVVQSGQSWQQGPVVLNWLDIQDSFDASGFNLVVHEVAHKLDTRNGDRASGVPLIPLREVAGWEHDLHAAMNNIQDEIDLVGESAASIDAYAATDPAECFAVLSEYFFSAPELFAPRFPALWQRFCHFYRQDPLARRRENGLQDEGDRRIVH.

Zn(2+) contacts are provided by His-111, His-148, His-152, and Glu-211.

The protein belongs to the MtfA family. As to quaternary structure, monomer in solution. Interacts with Mlc. The cofactor is Zn(2+).

It localises to the cytoplasm. Association between Mlc and MtfA may induce structural changes that activate the peptidase activity of MtfA while inactivating the DNA-binding ability of Mlc. The aminopeptidase activity is partially inhibited by metal chelators such as EDTA and phenantroline, but not by inhibitors for serine-, aspartyl-, or cysteine-proteases. Its function is as follows. Involved in the modulation of the activity of the glucose-phosphotransferase system (glucose-PTS). Interacts with the transcriptional repressor Mlc, preventing its interaction with DNA and leading to the modulation of expression of genes regulated by Mlc, including ptsG, which encodes the PTS system glucose-specific EIICB component. In terms of biological role, shows zinc-dependent metallopeptidase activity. In vitro, can cleave several artificial substrates. The highest activity is observed for L-alanine fused to 4-nitroanilide (L-alanine-pNA). Shows lower activity towards proline-pNA and valine-pNA. In Klebsiella pneumoniae subsp. pneumoniae (strain ATCC 700721 / MGH 78578), this protein is Mlc titration factor A.